The primary structure comprises 227 residues: Probable GTP-binding protein EngB (227 aa).

Positions 13-188 constitute an EngB-type G domain; sequence IGLEVAFAGR…AGVMGNWYEY (176 aa). GTP-binding positions include 21-28, 48-52, 67-70, 134-137, and 167-169; these read GRSNAGKS, GRTQM, DLPG, TKAD, and FSA. The Mg(2+) site is built by Ser28 and Thr50.

Belongs to the TRAFAC class TrmE-Era-EngA-EngB-Septin-like GTPase superfamily. EngB GTPase family. The cofactor is Mg(2+).

Necessary for normal cell division and for the maintenance of normal septation. This is Probable GTP-binding protein EngB from Psychrobacter cryohalolentis (strain ATCC BAA-1226 / DSM 17306 / VKM B-2378 / K5).